The following is a 136-amino-acid chain: Histone H3.3 (136 aa).

The tract at residues 1 to 42 (MARTKQTARKSTGGKAPRKQLASKAARKSAPVSGGVKKPHRY) is disordered. An N6,N6,N6-trimethyllysine; alternate modification is found at lysine 5. Residue lysine 5 is modified to N6,N6-dimethyllysine; alternate. N6-methyllysine; alternate occurs at positions 5 and 10. Position 10 is an N6-acetyllysine; alternate (lysine 10). Serine 11 bears the Phosphoserine mark. Position 15 is an N6,N6-dimethyllysine; alternate (lysine 15). Residues lysine 15, lysine 19, lysine 24, lysine 28, and lysine 37 each carry the N6-acetyllysine; alternate modification. Lysine 19, lysine 24, lysine 28, and lysine 37 each carry N6-methyllysine; alternate. 2 positions are modified to N6,N6,N6-trimethyllysine; alternate: lysine 28 and lysine 37. N6,N6-dimethyllysine; alternate occurs at positions 28 and 37. N6-acetyllysine is present on residues lysine 57 and lysine 65. Lysine 80 is subject to N6,N6,N6-trimethyllysine; alternate. At lysine 80 the chain carries N6,N6-dimethyllysine; alternate. Lysine 80 is modified (N6-methyllysine; alternate).

The protein belongs to the histone H3 family. As to quaternary structure, the nucleosome is a histone octamer containing two molecules each of H2A, H2B, H3 and H4 assembled in one H3-H4 heterotetramer and two H2A-H2B heterodimers. The octamer wraps approximately 147 bp of DNA. In terms of processing, phosphorylated by IPL1 to form H3S10ph. H3S10ph promotes subsequent H3K14ac formation by GCN5 and is required for transcriptional activation through TBP recruitment to the promoters. Mono-, di- and trimethylated by the COMPASS complex to form H3K4me1/2/3. H3K4me activates gene expression by regulating transcription elongation and plays a role in telomere length maintenance. H3K4me enrichment correlates with transcription levels, and occurs in a 5' to 3' gradient with H3K4me3 enrichment at the 5'-end of genes, shifting to H3K4me2 and then H3K4me1. Methylated by SET2 to form H3K36me. H3K36me represses gene expression. Methylated by DOT1 to form H3K79me. H3K79me is required for association of SIR proteins with telomeric regions and for telomeric silencing. The COMPASS-mediated formation of H3K4me2/3 and the DOT1-mediated formation of H3K79me require H2BK123ub1. Post-translationally, acetylation of histone H3 leads to transcriptional activation. H3K14ac formation by GCN5 is promoted by H3S10ph. H3K14ac can also be formed by ESA1. H3K56ac formation occurs predominantly in newly synthesized H3 molecules during G1, S and G2/M of the cell cycle and may be involved in DNA repair.

It localises to the nucleus. It is found in the chromosome. Functionally, core component of nucleosome. Nucleosomes wrap and compact DNA into chromatin, limiting DNA accessibility to the cellular machineries which require DNA as a template. Histones thereby play a central role in transcription regulation, DNA repair, DNA replication and chromosomal stability. DNA accessibility is regulated via a complex set of post-translational modifications of histones, also called histone code, and nucleosome remodeling. This is Histone H3.3 (HHT3) from Debaryomyces hansenii (strain ATCC 36239 / CBS 767 / BCRC 21394 / JCM 1990 / NBRC 0083 / IGC 2968) (Yeast).